The chain runs to 141 residues: Large ribosomal subunit protein uL11 (141 aa).

It belongs to the universal ribosomal protein uL11 family. As to quaternary structure, part of the ribosomal stalk of the 50S ribosomal subunit. Interacts with L10 and the large rRNA to form the base of the stalk. L10 forms an elongated spine to which L12 dimers bind in a sequential fashion forming a multimeric L10(L12)X complex. One or more lysine residues are methylated.

In terms of biological role, forms part of the ribosomal stalk which helps the ribosome interact with GTP-bound translation factors. This is Large ribosomal subunit protein uL11 from Coprothermobacter proteolyticus (strain ATCC 35245 / DSM 5265 / OCM 4 / BT).